The following is a 92-amino-acid chain: Small cysteine and glycine repeat-containing protein 9 (92 aa).

Residues 4 to 72 are 11 X 2 AA repeats of CG; it reads CGCGSCGCSG…CCRRTCSSCG (69 aa).

This sequence belongs to the KRTAP type 28 family.

In terms of biological role, in the hair cortex, hair keratin intermediate filaments are embedded in an interfilamentous matrix, consisting of hair keratin-associated proteins (KRTAP), which are essential for the formation of a rigid and resistant hair shaft through their extensive disulfide bond cross-linking with abundant cysteine residues of hair keratins. The matrix proteins include the high-sulfur and high-glycine-tyrosine keratins. This Homo sapiens (Human) protein is Small cysteine and glycine repeat-containing protein 9.